The primary structure comprises 832 residues: Histone acetyltransferase KAT2B (832 aa).

Over residues 1–22 (MSEAGGAGPGGCGAGAGAGAGP) the composition is skewed to gly residues. 2 disordered regions span residues 1 to 54 (MSEA…ACGP) and 395 to 436 (SYNS…DSHV). Residues 24-39 (ALPPQPAALPPAPPQG) show a composition bias toward pro residues. Residues 40 to 54 (SPCAAAAGGSGACGP) are compositionally biased toward low complexity. A compositionally biased stretch (polar residues) spans 395–413 (SYNSTSSSLEQPNAGSSSP). The span at 425–436 (PGEKRKMTDSHV) shows a compositional bias: basic and acidic residues. The N-acetyltransferase domain maps to 503–651 (LNQKPNKKIL…GATLMGCELN (149 aa)). The active-site Proton donor/acceptor is Glu570. Acetyl-CoA contacts are provided by residues 574-576 (CAV), 581-587 (QVKGYGT), and 612-615 (YAIG). The disordered stretch occupies residues 706–725 (IRETGWKPSGKEKSKEPRDP). Basic and acidic residues predominate over residues 714 to 725 (SGKEKSKEPRDP). The region spanning 723–827 (RDPDQLYSTL…KFFFSKIKEA (105 aa)) is the Bromo domain.

The protein belongs to the acetyltransferase family. GCN5 subfamily. Interacts with SIRT1. Interacts (unsumoylated form) with NR2C1; the interaction promotes transactivation activity. Interacts with EP300, CREBBP and DDX17. Interacts with NCOA1 and NCOA3. Component of a large chromatin remodeling complex, at least composed of MYSM1, KAT2B/PCAF, RBM10 and KIF11/TRIP5. Interacts with NR2C2 (hypophosphorylated and unsumoylated form); the interaction promotes the transactivation activity of NR2C2. Interacts with KLF1; the interaction does not acetylate KLF1 and there is no enhancement of its transactivational activity. Interacts with NFE4. Interacts with MECOM. Interacts with E2F1; the interaction acetylates E2F1 augmenting its DNA-binding and transcriptional activity. Interacts with NPAS2, BMAL1 and CLOCK. Interacts with BCAS3. Interacts with CEBPB. Interacts with NR4A3. Interacts with NFATC2. Interacts with TBX5. Interacts with PLK4. Interacts with RB1; this interaction leads to RB1 acetylation. Interacts with VRK1. As to quaternary structure, (Microbial infection) Interacts with and acetylates HIV-1 Tat. In terms of assembly, (Microbial infection) Interacts with HTLV-1 Tax. Ubiquitously expressed but most abundant in heart and skeletal muscle. Also expressed in the skin, in keratinocytes (at protein level).

Its subcellular location is the nucleus. It is found in the cytoplasm. The protein localises to the cytoskeleton. The protein resides in the microtubule organizing center. It localises to the centrosome. The catalysed reaction is L-lysyl-[histone] + acetyl-CoA = N(6)-acetyl-L-lysyl-[histone] + CoA + H(+). It carries out the reaction L-lysyl-[protein] + acetyl-CoA = N(6)-acetyl-L-lysyl-[protein] + CoA + H(+). It catalyses the reaction spermidine + acetyl-CoA = N(8)-acetylspermidine + CoA + H(+). Its activity is regulated as follows. Activated in vitro by very low concentrations of spermidine, but inhibited at spermidine concentrations higher than 4 uM. The activating effect of low spermidine concentrations may be mediated by N(8)-acetylspermidine produced by KAT2B/P/CAF itself acting as a positive feedback loop. Functions as a histone acetyltransferase (HAT) to promote transcriptional activation. Has significant histone acetyltransferase activity with core histones (H3 and H4), and also with nucleosome core particles. Has a a strong preference for acetylation of H3 at 'Lys-9' (H3K9ac). Also acetylates non-histone proteins, such as ACLY, MAPRE1/EB1, PLK4, RRP9/U3-55K and TBX5. Inhibits cell-cycle progression and counteracts the mitogenic activity of the adenoviral oncoprotein E1A. Acts as a circadian transcriptional coactivator which enhances the activity of the circadian transcriptional activators: NPAS2-BMAL1 and CLOCK-BMAL1 heterodimers. Involved in heart and limb development by mediating acetylation of TBX5, acetylation regulating nucleocytoplasmic shuttling of TBX5. Acts as a negative regulator of centrosome amplification by mediating acetylation of PLK4. Acetylates RRP9/U3-55K, a core subunit of the U3 snoRNP complex, impairing pre-rRNA processing. Acetylates MAPRE1/EB1, promoting dynamic kinetochore-microtubule interactions in early mitosis. Also acetylates spermidine. Functionally, (Microbial infection) In case of HIV-1 infection, it is recruited by the viral protein Tat. Regulates Tat's transactivating activity and may help inducing chromatin remodeling of proviral genes. This is Histone acetyltransferase KAT2B from Homo sapiens (Human).